A 303-amino-acid polypeptide reads, in one-letter code: Glycine--tRNA ligase alpha subunit (303 aa).

Belongs to the class-II aminoacyl-tRNA synthetase family. In terms of assembly, tetramer of two alpha and two beta subunits.

It is found in the cytoplasm. The enzyme catalyses tRNA(Gly) + glycine + ATP = glycyl-tRNA(Gly) + AMP + diphosphate. The protein is Glycine--tRNA ligase alpha subunit of Methylobacterium radiotolerans (strain ATCC 27329 / DSM 1819 / JCM 2831 / NBRC 15690 / NCIMB 10815 / 0-1).